The following is a 969-amino-acid chain: RNA polymerase-associated protein RapA (969 aa).

Residues 164-334 enclose the Helicase ATP-binding domain; it reads EVGRRHAPRV…FARLRLLDAD (171 aa). Residue 177 to 184 participates in ATP binding; sequence DEVGLGKT. Positions 280-283 match the DEAH box motif; sequence DEAH. The region spanning 492–646 is the Helicase C-terminal domain; it reads RVNWLLEKVK…TCPTGRAVYD (155 aa).

It belongs to the SNF2/RAD54 helicase family. RapA subfamily. As to quaternary structure, interacts with the RNAP. Has a higher affinity for the core RNAP than for the holoenzyme. Its ATPase activity is stimulated by binding to RNAP.

Functionally, transcription regulator that activates transcription by stimulating RNA polymerase (RNAP) recycling in case of stress conditions such as supercoiled DNA or high salt concentrations. Probably acts by releasing the RNAP, when it is trapped or immobilized on tightly supercoiled DNA. Does not activate transcription on linear DNA. Probably not involved in DNA repair. This Vibrio cholerae serotype O1 (strain ATCC 39315 / El Tor Inaba N16961) protein is RNA polymerase-associated protein RapA.